Here is an 84-residue protein sequence, read N- to C-terminus: uncharacterized protein (84 aa).

The disordered stretch occupies residues 62-84 (GYATKKDTMRMSAQKRTTKRLKP).

This is an uncharacterized protein from Soybean chlorotic mottle virus.